A 545-amino-acid polypeptide reads, in one-letter code: RNA-directed RNA polymerase beta chain (545 aa).

Residues 243 to 373 (RLAQQGSRDG…PNLRKTFTSG (131 aa)) form the RdRp catalytic domain.

Part of the viral RNA-dependent RNA polymerase complex, the other subunits are probably the host ribosomal protein S1, EF-Tu and EF-Ts.

The catalysed reaction is RNA(n) + a ribonucleoside 5'-triphosphate = RNA(n+1) + diphosphate. Its function is as follows. This is the catalytic subunit of the viral RNA-dependent RNA polymerase complex. This complex is involved in viral RNA replication that produces (+)-stranded genomes via a complementary, (-)-stranded intermediate. The protein is RNA-directed RNA polymerase beta chain of Enterobacteria phage fr (Bacteriophage fr).